A 259-amino-acid polypeptide reads, in one-letter code: Protein unc-50 homolog A (259 aa).

Topologically, residues 1-82 (MLPTTSVSPR…TKDQWARDDP (82 aa)) are cytoplasmic. Residues 83 to 103 (AFLVLLSIWLCVSTVGFGFVL) form a helical membrane-spanning segment. Residues 104–112 (DMSFFETFK) lie on the Lumenal side of the membrane. The helical transmembrane segment at 113-133 (LLLWVVFIDCVGVGLLIATLM) threads the bilayer. Residues 134 to 158 (WFVSNKYMVKRQGKDYDVEWGYTFD) are Cytoplasmic-facing. Residues 159-179 (VHLNAFYPLLVILHFIQLFFI) traverse the membrane as a helical segment. The Lumenal portion of the chain corresponds to 180–181 (NH). The helical transmembrane segment at 182 to 202 (VILSGWFIGYFVGNTIWLIAI) threads the bilayer. At 203–222 (GYYIYITFLGYSALPFLKNT) the chain is on the cytoplasmic side. A helical membrane pass occupies residues 223-243 (VILLYPFAALALLYVLSLALG). Residues 244–259 (WNFTEKLCLFYKYRVR) lie on the Lumenal side of the membrane.

The protein belongs to the unc-50 family.

The protein resides in the nucleus inner membrane. It is found in the golgi apparatus membrane. Its function is as follows. Involved in the cell surface expression of neuronal nicotinic receptors. Binds RNA. In Xenopus laevis (African clawed frog), this protein is Protein unc-50 homolog A (unc50-a).